Here is a 343-residue protein sequence, read N- to C-terminus: Phosphoribosylformylglycinamidine cyclo-ligase (343 aa).

This sequence belongs to the AIR synthase family.

The protein resides in the cytoplasm. It carries out the reaction 2-formamido-N(1)-(5-O-phospho-beta-D-ribosyl)acetamidine + ATP = 5-amino-1-(5-phospho-beta-D-ribosyl)imidazole + ADP + phosphate + H(+). The protein operates within purine metabolism; IMP biosynthesis via de novo pathway; 5-amino-1-(5-phospho-D-ribosyl)imidazole from N(2)-formyl-N(1)-(5-phospho-D-ribosyl)glycinamide: step 2/2. The chain is Phosphoribosylformylglycinamidine cyclo-ligase from Thermodesulfovibrio yellowstonii (strain ATCC 51303 / DSM 11347 / YP87).